Consider the following 729-residue polypeptide: Fatty acid oxidation complex subunit alpha (729 aa).

Residues 1-189 (MLYKGDTLYL…KIGLVDGVVK (189 aa)) form an enoyl-CoA hydratase/isomerase region. Aspartate 296 is a substrate binding site. Residues 311–729 (ETPKQAAVLG…ARPVGSLKTA (419 aa)) form a 3-hydroxyacyl-CoA dehydrogenase region. NAD(+) is bound by residues methionine 324, aspartate 343, 400–402 (VVE), lysine 407, and serine 429. Histidine 450 functions as the For 3-hydroxyacyl-CoA dehydrogenase activity in the catalytic mechanism. Residue asparagine 453 coordinates NAD(+). Substrate is bound by residues asparagine 500 and tyrosine 660. The segment at 708–729 (RHNEPYYPPVEPARPVGSLKTA) is disordered.

It in the N-terminal section; belongs to the enoyl-CoA hydratase/isomerase family. In the C-terminal section; belongs to the 3-hydroxyacyl-CoA dehydrogenase family. Heterotetramer of two alpha chains (FadB) and two beta chains (FadA).

The catalysed reaction is a (3S)-3-hydroxyacyl-CoA + NAD(+) = a 3-oxoacyl-CoA + NADH + H(+). It catalyses the reaction a (3S)-3-hydroxyacyl-CoA = a (2E)-enoyl-CoA + H2O. The enzyme catalyses a 4-saturated-(3S)-3-hydroxyacyl-CoA = a (3E)-enoyl-CoA + H2O. It carries out the reaction (3S)-3-hydroxybutanoyl-CoA = (3R)-3-hydroxybutanoyl-CoA. The catalysed reaction is a (3Z)-enoyl-CoA = a 4-saturated (2E)-enoyl-CoA. It catalyses the reaction a (3E)-enoyl-CoA = a 4-saturated (2E)-enoyl-CoA. It functions in the pathway lipid metabolism; fatty acid beta-oxidation. Functionally, involved in the aerobic and anaerobic degradation of long-chain fatty acids via beta-oxidation cycle. Catalyzes the formation of 3-oxoacyl-CoA from enoyl-CoA via L-3-hydroxyacyl-CoA. It can also use D-3-hydroxyacyl-CoA and cis-3-enoyl-CoA as substrate. This Salmonella newport (strain SL254) protein is Fatty acid oxidation complex subunit alpha.